Reading from the N-terminus, the 26-residue chain is Delta-hemolysin (26 aa).

Methionine 1 carries the N-formylmethionine modification.

Belongs to the delta-lysin family.

Its subcellular location is the secreted. It is found in the host cell membrane. Functionally, lyses erythrocytes and many other mammalian cells. In Staphylococcus aureus (strain Mu50 / ATCC 700699), this protein is Delta-hemolysin (hld).